The chain runs to 867 residues: Nitrate reductase [NADPH] (867 aa).

A disordered region spans residues 38–58 (DIPLPPPSKEPTEVLSIDKPT). C152 contacts Mo-molybdopterin. Positions 514 to 589 (NRIIDLQEFK…MPDYHIGTMD (76 aa)) constitute a Cytochrome b5 heme-binding domain. Residues H549 and H572 each coordinate heme. Residues 615–726 (KSWTKATLVK…KGPTGRFEYL (112 aa)) enclose the FAD-binding FR-type domain. Residues 669-672 (RSYT), 686-690 (LVKIY), F691, 700-702 (KMT), and T753 each bind FAD. Position 837–846 (837–846 (MVLICGPEAM)) interacts with NADP(+).

This sequence belongs to the nitrate reductase family. As to quaternary structure, homodimer. It depends on FAD as a cofactor. Heme is required as a cofactor. Mo-molybdopterin serves as cofactor.

It catalyses the reaction nitrite + NADP(+) + H2O = nitrate + NADPH + H(+). Nitrate reductase is a key enzyme involved in the first step of nitrate assimilation in plants, fungi and bacteria. The chain is Nitrate reductase [NADPH] (niaD) from Aspergillus niger.